The chain runs to 261 residues: MAGIEVQILEKKEDSIKFVLKGVHVSFANALRRTILGEVPTFAVDEVEFYENDSALFDEIIAHRLAMIPLTTPVDRFELDALELDDYTVTLSLEAEGPGIVYSGDLKSDDPDVKPVNPNIPIVKLAEGQRLVFNAYAKLGRGKDHAKWQPGFVYYKYYTIVHISKSIPEWKELKKLAKKRGLPVEETEEEVLVTTIKPFYIPKDFEEYEGKEIWEEIVPNTYIFTVETNGELPVEEIVSIALKILMRKADRFISELQKLTS.

It belongs to the archaeal Rpo3/eukaryotic RPB3 RNA polymerase subunit family. Part of the RNA polymerase complex.

It localises to the cytoplasm. The catalysed reaction is RNA(n) + a ribonucleoside 5'-triphosphate = RNA(n+1) + diphosphate. In terms of biological role, DNA-dependent RNA polymerase (RNAP) catalyzes the transcription of DNA into RNA using the four ribonucleoside triphosphates as substrates. The polypeptide is DNA-directed RNA polymerase subunit Rpo3 (Pyrococcus furiosus (strain ATCC 43587 / DSM 3638 / JCM 8422 / Vc1)).